Consider the following 660-residue polypeptide: Glycine betaine transporter (660 aa).

The Cytoplasmic segment spans residues 1–13 (MPSKTSSRFANIN). Residues 14–34 (PNVFVSTIMIIAIFLAIVILA) traverse the membrane as a helical segment. Residues 35-52 (PDAFELLTQQLKNWITES) are Periplasmic-facing. A helical transmembrane segment spans residues 53–73 (FSWFYVLSVAFFLIVLGYIAC). The Cytoplasmic segment spans residues 74–93 (SSSGKIKLGPDHSQPDYSNS). A helical membrane pass occupies residues 94-114 (SWFAMLFTAGMGIGLMFFGIA). Residues 115 to 139 (EPIMHYVSPPSGEPETILAAQQSMR) lie on the Periplasmic side of the membrane. Residues 140-160 (VTFFHWGLHAWGIYAIVALSL) form a helical membrane-spanning segment. The Cytoplasmic segment spans residues 161–195 (SYFAYRHDLPLKIRSSLYPLIGKKIYGPMGDAVDT). A helical transmembrane segment spans residues 196 to 216 (FATIGTIFGVATTLGFGVTQI). Residues 217–230 (SSGLNYLFGFEPTS) are Periplasmic-facing. A helical membrane pass occupies residues 231–251 (FSKVVLIIIVSAMAALSVGLG). At 252–263 (LDKGVKRLAELN) the chain is on the cytoplasmic side. A helical transmembrane segment spans residues 264-284 (LVLAVTLLAFVFFTSATVYLL). At 285 to 316 (QTTIQNTGQYISNLFEMTFNLYAYQPNGWIGG) the chain is on the periplasmic side. The chain crosses the membrane as a helical span at residues 317-337 (WTIMYWAWWISWSPFVGMFIA). The Cytoplasmic portion of the chain corresponds to 338 to 347 (RVSRGRTIRE). A helical membrane pass occupies residues 348 to 368 (FIIGVMLIPTGFTLIWMGFMG). At 369–401 (NAGLYSILHDGNLSLLNAVQRDSSVALFEFLHS) the chain is on the periplasmic side. A helical membrane pass occupies residues 402–422 (LPFSGVMSLLATVLVVLFFVT). Residues 423 to 446 (SADSGALVVDYLTAKSEDSPVWQR) lie on the Cytoplasmic side of the membrane. Residues 447-467 (LFWIVVMAGLAIILLLAGGLT) form a helical membrane-spanning segment. The Periplasmic portion of the chain corresponds to 468 to 471 (ALQS). Residues 472-492 (ATIMSALPFTFIMLLICWGLI) form a helical membrane-spanning segment. Over 493-660 (KALRIDSTKM…LSVMRAQTGN (168 aa)) the chain is Cytoplasmic.

Belongs to the BCCT transporter (TC 2.A.15) family.

The protein resides in the cell inner membrane. With respect to regulation, uptake is activated by NaCl, KCl or mannose gradients across the cell membrane. Inhibited by the protonophore 3,3',4',5-tetrachlorosalicylanilide (TCS). Its function is as follows. Energy-dependent uptake of glycine betaine in response to high salinity. This Acinetobacter baylyi (strain ATCC 33305 / BD413 / ADP1) protein is Glycine betaine transporter.